Consider the following 577-residue polypeptide: (E)-beta-farnesene synthase (577 aa).

5 residues coordinate Mg(2+): Asp327, Asp331, Asp474, Ser478, and Glu482. The short motif at 327–331 (DDTFD) is the DDXXD motif element.

The protein belongs to the terpene synthase family. Mg(2+) serves as cofactor. The cofactor is Co(2+). Requires Mn(2+) as cofactor. As to expression, expressed in flowers.

Its subcellular location is the cytoplasm. The catalysed reaction is (2E,6E)-farnesyl diphosphate = (E)-beta-farnesene + diphosphate. It functions in the pathway secondary metabolite biosynthesis; terpenoid biosynthesis. With respect to regulation, strongly inhibited by manganese at concentration higher than 20 uM. In terms of biological role, sesquiterpene cyclase catalyzing the production of beta-farnesene from farnesyl diphosphate. Unable to use geranyl diphosphate as substrate. The polypeptide is (E)-beta-farnesene synthase (CASC125) (Artemisia annua (Sweet wormwood)).